The primary structure comprises 351 residues: Phosphate acyltransferase (351 aa).

Belongs to the PlsX family. In terms of assembly, homodimer. Probably interacts with PlsY.

The protein localises to the cytoplasm. The enzyme catalyses a fatty acyl-[ACP] + phosphate = an acyl phosphate + holo-[ACP]. It functions in the pathway lipid metabolism; phospholipid metabolism. Catalyzes the reversible formation of acyl-phosphate (acyl-PO(4)) from acyl-[acyl-carrier-protein] (acyl-ACP). This enzyme utilizes acyl-ACP as fatty acyl donor, but not acyl-CoA. This Gloeothece citriformis (strain PCC 7424) (Cyanothece sp. (strain PCC 7424)) protein is Phosphate acyltransferase.